Here is a 507-residue protein sequence, read N- to C-terminus: MKSIKPVLLLILDGFGHRTEGDDNAILHARMPVWSRLREQYAYGTINASENFVGLPSGQFGNSEVGHLNIGAGRIVQQDISRIDCDIEDGRFSSNDTLQQAMSKAQGSALHILGLLSDGGVHSHENHIHALIRAAQAAGVPKIYVHAFLDGRDTPPRSAETYLKRLDAALAECPNARLVSVTGRYWAMDRDKRWERVEPAYRLLVDGEGLFHAETGLDALKAAYERDENDEFVKATGIGAPVKMQDGDALIFMNFRADRARQLTSALTDPAFDGFKARQPKFGYYATLTSYGEAYSALPVAYAPQKIHNGMGEYLSSKGLKQLRIAETEKYPHVTYFFNGGEEQVYPGEDRILVPSPKVATYDLQPEMSAGEVTDKIVAAIQSGQYQAIFCNYANGDMVGHSGVFDAAVKAVEALDGCIERCVDAMLAAGGEVLITADHGNCEQMYDGEHHQPHTQHTTNQVPFLYIGRPAKIRAGGSLRDISPSLLAMMGLEQPAEMTGQSLIDFQ.

Mn(2+)-binding residues include aspartate 13 and serine 63. Serine 63 serves as the catalytic Phosphoserine intermediate. Substrate-binding positions include histidine 122, 152–153, arginine 184, arginine 190, 256–259, and lysine 330; these read RD and RADR. Mn(2+) is bound by residues aspartate 397, histidine 401, aspartate 438, histidine 439, and histidine 457.

This sequence belongs to the BPG-independent phosphoglycerate mutase family. In terms of assembly, monomer. Mn(2+) is required as a cofactor.

It carries out the reaction (2R)-2-phosphoglycerate = (2R)-3-phosphoglycerate. Its pathway is carbohydrate degradation; glycolysis; pyruvate from D-glyceraldehyde 3-phosphate: step 3/5. Functionally, catalyzes the interconversion of 2-phosphoglycerate and 3-phosphoglycerate. This Chromobacterium violaceum (strain ATCC 12472 / DSM 30191 / JCM 1249 / CCUG 213 / NBRC 12614 / NCIMB 9131 / NCTC 9757 / MK) protein is 2,3-bisphosphoglycerate-independent phosphoglycerate mutase.